A 393-amino-acid chain; its full sequence is MVAGTRCLLVLLLPQVLLGGAAGLIPELGRKKFAGASRPLSRPSEDVLSEFELRLLSMFGLKQRPTPSKDVVVPPYMLDLYRRHSGQPGALAPDHRLERAASRANTVLSFHHEEAIEELSEMSGKTSRRFFFNLSSVPTDEFLTSAELQIFREQMQEALGNSSFQHRINIYEIIKPATASSKFPVTRLLDTRLVTQNTSQWESFDVTPAVMRWTAQGHTNHGFVVEVAHLEEKPGVSKRHVRISRSLHQDEHSWSQVRPLLVTFGHDGKGHPLHKREKRQAKHKQRKRLKSSCKRHPLYVDFSDVGWNDWIVAPPGYHAFYCHGECPFPLADHLNSTNHAIVQTLVNSVNSKIPKACCVPTELSAISMLYLDENEKVVLKNYQDMVVEGCGCR.

The signal sequence occupies residues 1–19 (MVAGTRCLLVLLLPQVLLG). A propeptide spans 20–279 (GAAGLIPELG…GHPLHKREKR (260 aa)) (cleaved by PCSK5). S85 is modified (phosphoserine). 3 N-linked (GlcNAc...) asparagine glycosylation sites follow: N133, N161, and N197. The tract at residues 268–290 (GKGHPLHKREKRQAKHKQRKRLK) is disordered. Positions 271–290 (HPLHKREKRQAKHKQRKRLK) are enriched in basic residues. Cystine bridges form between C293/C358, C322/C390, and C326/C392. N335 is a glycosylation site (N-linked (GlcNAc...) asparagine).

This sequence belongs to the TGF-beta family. In terms of assembly, homodimer; disulfide-linked. Interacts with SOSTDC1. Interacts with GREM2, RGMA, RGMB and RGMC. Interacts with ASPN. Interacts with MAFP5. Interacts with FBN1 (via N-terminal domain) and FBN2. Interacts with type I receptor BMPR1A. Interacts with type II receptor BMPR2. Interacts with SCUBE3. Interacts with TNFAIP6 (primarily via Link domain); this interaction is inhibited by hyaluronan. Interacts with ERFE. Interacts with BMPR1A/ALK3; the interaction may induce HAMP expression. Forms heterodimers with BMP6 in vitro; the heterodimer then binds to its receptor BMPR1A /ALK3 and may induce HAMP expression. Interacts with TGFBR3. Expressed in femur, calvaria, trachea, lung and ovary.

It localises to the secreted. Functionally, growth factor of the TGF-beta superfamily that plays essential roles in many developmental processes, including cardiogenesis, neurogenesis, and osteogenesis. Induces cartilage and bone formation. Initiates the canonical BMP signaling cascade by associating with type I receptor BMPR1A and type II receptor BMPR2. Once all three components are bound together in a complex at the cell surface, BMPR2 phosphorylates and activates BMPR1A. In turn, BMPR1A propagates signal by phosphorylating SMAD1/5/8 that travel to the nucleus and act as activators and repressors of transcription of target genes. Also acts to promote expression of HAMP, via the interaction with its receptor BMPR1A/ALK3. Can also signal through non-canonical pathways such as ERK/MAP kinase signaling cascade that regulates osteoblast differentiation. Also stimulates the differentiation of myoblasts into osteoblasts via the EIF2AK3-EIF2A-ATF4 pathway by stimulating EIF2A phosphorylation which leads to increased expression of ATF4 which plays a central role in osteoblast differentiation. Acts as a positive regulator of odontoblast differentiation during mesenchymal tooth germ formation, expression is repressed during the bell stage by MSX1-mediated inhibition of CTNNB1 signaling. The protein is Bone morphogenetic protein 2 (Bmp2) of Rattus norvegicus (Rat).